The sequence spans 131 residues: Small ribosomal subunit protein uS12 (131 aa).

Asp89 carries the post-translational modification 3-methylthioaspartic acid. A disordered region spans residues 106–131; it reads GVDGRKQGRSKYGAKKAKVAKTASAK. The segment covering 112 to 124 has biased composition (basic residues); the sequence is QGRSKYGAKKAKV.

This sequence belongs to the universal ribosomal protein uS12 family. Part of the 30S ribosomal subunit. Contacts proteins S8 and S17. May interact with IF1 in the 30S initiation complex.

With S4 and S5 plays an important role in translational accuracy. Functionally, interacts with and stabilizes bases of the 16S rRNA that are involved in tRNA selection in the A site and with the mRNA backbone. Located at the interface of the 30S and 50S subunits, it traverses the body of the 30S subunit contacting proteins on the other side and probably holding the rRNA structure together. The combined cluster of proteins S8, S12 and S17 appears to hold together the shoulder and platform of the 30S subunit. The chain is Small ribosomal subunit protein uS12 from Endomicrobium trichonymphae.